A 307-amino-acid polypeptide reads, in one-letter code: Ornithine carbamoyltransferase (307 aa).

Carbamoyl phosphate contacts are provided by residues S50–T53, Q77, R101, and H128–Q131. Residues N160, D224, and S228–M229 contribute to the L-ornithine site. Carbamoyl phosphate is bound by residues C264–L265 and R292.

Belongs to the aspartate/ornithine carbamoyltransferase superfamily. OTCase family.

Its subcellular location is the cytoplasm. The enzyme catalyses carbamoyl phosphate + L-ornithine = L-citrulline + phosphate + H(+). It participates in amino-acid biosynthesis; L-arginine biosynthesis; L-arginine from L-ornithine and carbamoyl phosphate: step 1/3. Its activity is regulated as follows. Inhibited by arginine, norvaline. In terms of biological role, reversibly catalyzes the transfer of the carbamoyl group from carbamoyl phosphate (CP) to the N(epsilon) atom of ornithine (ORN) to produce L-citrulline, which is a substrate for argininosuccinate synthetase, the enzyme involved in the final step in arginine biosynthesis. The sequence is that of Ornithine carbamoyltransferase from Mycolicibacterium smegmatis (strain ATCC 700084 / mc(2)155) (Mycobacterium smegmatis).